A 615-amino-acid chain; its full sequence is MSAEKQTHGFQAEVSRLLHLMIHSLYSNREIFLRELISNASDACDKLRFEALDNPALLEQGGEPQITLRVDKDAGTLTIADNGIGMSENEVVDNLGTIARSGTEKFLANLSGDQKKDAQLIGQFGVGFYSAFIVAETVTVETRKAGEAVNNGVRWESDGKGEFTVETVPRDEQGTAVILHLRDDAKDFLDDFKIRQVIGQYSDHVAFPIVLETPQEGDKDTKTETLNSATALWQRPRSEVTDEEYQSFYKHISHDFQDALTWSHNKVEGKLEYTSLLYVPAQAPFDLYQREANRGLKLYVQRVFIMDDAEQFLPQYLRFIKGVIDAPDLPLNVSRELLQDYGPVQKIRSALTKRVLQMLKKLSNDDKQYAKFWAQFGSVIKEGVAEDRDNQQSIAALLRFATSKTPDSVSTSLDQYLESKPADQDCIYYLLADTPSAARQSPHLEVFRKKGIEVLLLSDPVDEWMVGYLESYKEVKLVNAARGELDLGDESEQANNDDPLIQRLAASLTEQVEAVRATTRLVDSPACLVLAEDQLGPQMRRMLEAAGQPVPENKPVLEVNLDHTLLQALTRIEEDEKFNDFAALLLDQAMLAEGQLPKDPAATARRMQALLSQSV.

The tract at residues 1–335 (MSAEKQTHGF…APDLPLNVSR (335 aa)) is a; substrate-binding. The tract at residues 336–541 (ELLQDYGPVQ…EDQLGPQMRR (206 aa)) is b. The c stretch occupies residues 542–615 (MLEAAGQPVP…RMQALLSQSV (74 aa)).

Belongs to the heat shock protein 90 family. As to quaternary structure, homodimer.

It is found in the cytoplasm. Its function is as follows. Molecular chaperone. Has ATPase activity. The chain is Chaperone protein HtpG from Alcanivorax borkumensis (strain ATCC 700651 / DSM 11573 / NCIMB 13689 / SK2).